Reading from the N-terminus, the 149-residue chain is 4-hydroxyphenylacetate 3-monooxygenase, reductase component (149 aa).

FAD is bound at residue E27–A34. NAD(+) is bound at residue S37. Residues A48–S50, K54–L55, and H80 each bind FAD. NAD(+) contacts are provided by residues H116 and Y137 to R140.

The protein belongs to the non-flavoprotein flavin reductase family. HpaC subfamily. Homodimer. 4-HPA 3-monooxygenase consists of a reductase component HpaC and an oxygenase component HpaB.

The catalysed reaction is a reduced flavin + NAD(+) = an oxidized flavin + NADH + 2 H(+). It functions in the pathway aromatic compound metabolism; 4-hydroxyphenylacetate degradation; pyruvate and succinate semialdehyde from 4-hydroxyphenylacetate: step 1/7. In terms of biological role, catalyzes the reduction of free flavins (FMN, FAD and riboflavin) by NADH. Subsequently, the reduced flavins diffuse to the large HpaB component. It utilizes NADH, but not NADPH as an electron donor, and both FAD and FMN as electron acceptors. In Thermus thermophilus (strain ATCC 27634 / DSM 579 / HB8), this protein is 4-hydroxyphenylacetate 3-monooxygenase, reductase component.